The primary structure comprises 479 residues: Transcript termination protein A18 (479 aa).

The 157-residue stretch at 99 to 255 (KNKHKRPTYI…NDIINVSNSL (157 aa)) folds into the Helicase ATP-binding domain. 112–119 (LACGFGKT) contacts ATP. The DESH box motif lies at 205–208 (DESH). Positions 308-469 (ILDTIIYDFN…EKKGKKKELA (162 aa)) constitute a Helicase C-terminal domain.

This sequence belongs to the helicase family. Poxviruses subfamily. In terms of assembly, interacts with G2. Might be part of a transcription complex composed at least of G2, A18, and H5.

The protein localises to the virion. In terms of biological role, DNA helicase which seems to act as a postreplicative transcription termination factor. Involved in ATP-dependent release of nascent RNA. Forms a stable complex with single-stranded DNA, and to a lesser extent RNA. The chain is Transcript termination protein A18 from Homo sapiens (Human).